A 217-amino-acid polypeptide reads, in one-letter code: MKFFVDTADVKEIRELNDLGLVDGVTTNPSLILKSGRDIIEVTKEICNIVKGPVSAEVAATEYEQMMKEAAVIARIADNICIKLPVTLDGLKACKALTSEGHKVNMTLCFSANQALLAAKAGATFISPFIGRLDDTGINGMELIAEIRTIYDNYDFRTEILAASVRTVNHVKEAALIGADVVTAPPATLKALVKHPLTDKGLETFLADWAKTGQKIA.

The active-site Schiff-base intermediate with substrate is Lys-83.

Belongs to the transaldolase family. Type 3B subfamily.

The protein localises to the cytoplasm. It catalyses the reaction D-sedoheptulose 7-phosphate + D-glyceraldehyde 3-phosphate = D-erythrose 4-phosphate + beta-D-fructose 6-phosphate. It functions in the pathway carbohydrate degradation; pentose phosphate pathway; D-glyceraldehyde 3-phosphate and beta-D-fructose 6-phosphate from D-ribose 5-phosphate and D-xylulose 5-phosphate (non-oxidative stage): step 2/3. Transaldolase is important for the balance of metabolites in the pentose-phosphate pathway. This Brucella abortus (strain S19) protein is Probable transaldolase.